Consider the following 329-residue polypeptide: Secretory carrier-associated membrane protein 2 (329 aa).

2 disordered regions span residues 1-21 (MSAFDTNPFADPVDVNPFQDP) and 51-72 (VTQLPGSSQPAVLQPSVEPTQP). Topologically, residues 1–153 (MSAFDTNPFA…DYQRICKMLY (153 aa)) are cytoplasmic. Residues 154–174 (YLWMLHSVTLFLNLLACLAWF) traverse the membrane as a helical segment. Residues 175-181 (SGNSSKG) are Lumenal-facing. A helical transmembrane segment spans residues 182-202 (VDFGLSILWFLIFTPCAFLCW). Residues 203-218 (YRPIYKAFRSDNSFSF) lie on the Cytoplasmic side of the membrane. The tract at residues 203-218 (YRPIYKAFRSDNSFSF) is interaction with SLC9A7. Residues 219–239 (FVFFFVFFCQIGIYIIQLVGI) form a helical membrane-spanning segment. Residues 240-262 (PGLGDSGWIAALSTLDNHSLAIS) are Lumenal-facing. The helical transmembrane segment at 263–283 (VIMMVVAGFFTLCAVLSVFLL) threads the bilayer. Residues 284–329 (QRVHSLYRRTGASFQQAQEEFSQGIFSSRTFHRAASSAAQGAFQGN) lie on the Cytoplasmic side of the membrane. 2 positions are modified to phosphoserine: Ser-319 and Ser-320.

It belongs to the SCAMP family. In terms of assembly, interacts with SLC6A4 and SLC9A7. Interacts with SLC9A5; this interaction regulates SLC9A5 cell-surface targeting and SLC9A5 activity. Widely expressed.

The protein resides in the golgi apparatus. It localises to the trans-Golgi network membrane. Its subcellular location is the recycling endosome membrane. In terms of biological role, functions in post-Golgi recycling pathways. Acts as a recycling carrier to the cell surface. In Homo sapiens (Human), this protein is Secretory carrier-associated membrane protein 2 (SCAMP2).